Here is a 649-residue protein sequence, read N- to C-terminus: Putative calpain-like cysteine protease A (649 aa).

Residues 1–3 constitute a propeptide that is removed on maturation; sequence MLT. Disordered regions lie at residues 1-22 and 124-193; these read MLTTESPTTTTTTTTTTTSSPS and PLSN…SMPA. The region spanning 15–123 is the C2 domain; the sequence is TTTTSSPSSD…LHANGEAKWY (109 aa). Over residues 140–149 the composition is skewed to low complexity; the sequence is ITNSNNKDNN. Basic and acidic residues predominate over residues 159–172; sequence AQEKGDEDQHHSAD. Domain III stretches follow at residues 458–489 and 498–633; these read EGTYIVIPSTYDHGIEGAFHLTLFTDDKNATF and EVEQ…ISLD.

Belongs to the peptidase C2 family. Monomer. Undergoes autolytic cleavage between Pro-192 and Ala-193.

The protein resides in the cytoplasm. The protein localises to the cytosol. Its function is as follows. Has a weak caseinolytic activity. This is Putative calpain-like cysteine protease A (cplA) from Dictyostelium discoideum (Social amoeba).